Here is a 340-residue protein sequence, read N- to C-terminus: N-acetyl-gamma-glutamyl-phosphate reductase (340 aa).

Cys-146 is an active-site residue.

This sequence belongs to the NAGSA dehydrogenase family. Type 1 subfamily.

The protein localises to the cytoplasm. The catalysed reaction is N-acetyl-L-glutamate 5-semialdehyde + phosphate + NADP(+) = N-acetyl-L-glutamyl 5-phosphate + NADPH + H(+). It functions in the pathway amino-acid biosynthesis; L-arginine biosynthesis; N(2)-acetyl-L-ornithine from L-glutamate: step 3/4. Its function is as follows. Catalyzes the NADPH-dependent reduction of N-acetyl-5-glutamyl phosphate to yield N-acetyl-L-glutamate 5-semialdehyde. The protein is N-acetyl-gamma-glutamyl-phosphate reductase of Streptococcus gordonii (strain Challis / ATCC 35105 / BCRC 15272 / CH1 / DL1 / V288).